Here is a 301-residue protein sequence, read N- to C-terminus: Homeobox protein knotted-1-like 1 (301 aa).

The tract at residues 141-170 (CSGATSPPATTATHSDEMVGSSDEDQCSGE) is disordered. Over residues 144-153 (ATSPPATTAT) the composition is skewed to low complexity. The region spanning 188–208 (ELKEMLLKKYSGCLSRLRSEF) is the ELK domain. The segment at residues 209 to 272 (LKKRKKGKLP…NQRKRHWKPS (64 aa)) is a DNA-binding region (homeobox; TALE-type).

The protein belongs to the TALE/KNOX homeobox family.

It localises to the nucleus. Functionally, probable transcription factor that may be involved in shoot formation during early embryogenesis. In Oryza sativa subsp. japonica (Rice), this protein is Homeobox protein knotted-1-like 1 (OSH6).